The sequence spans 493 residues: Cysteine sulfinic acid decarboxylase (493 aa).

An N6-(pyridoxal phosphate)lysine modification is found at Lys-305.

This sequence belongs to the group II decarboxylase family. As to quaternary structure, homodimer. It depends on pyridoxal 5'-phosphate as a cofactor. As to expression, expressed in brain, liver and kidney.

The catalysed reaction is L-aspartate + H(+) = beta-alanine + CO2. It carries out the reaction 3-sulfino-L-alanine + H(+) = hypotaurine + CO2. The enzyme catalyses L-cysteate + H(+) = taurine + CO2. The protein operates within organosulfur biosynthesis; taurine biosynthesis; hypotaurine from L-cysteine: step 2/2. Functionally, catalyzes the decarboxylation of L-aspartate, 3-sulfino-L-alanine (cysteine sulfinic acid), and L-cysteate to beta-alanine, hypotaurine and taurine, respectively. The preferred substrate is 3-sulfino-L-alanine. Does not exhibit any decarboxylation activity toward glutamate. This is Cysteine sulfinic acid decarboxylase (Csad) from Rattus norvegicus (Rat).